Consider the following 333-residue polypeptide: Adenosine deaminase (333 aa).

Positions 12 and 14 each coordinate Zn(2+). Positions 14, 16, and 170 each coordinate substrate. Histidine 197 contributes to the Zn(2+) binding site. The Proton donor role is filled by glutamate 200. A Zn(2+)-binding site is contributed by aspartate 278. Residue aspartate 279 coordinates substrate.

The protein belongs to the metallo-dependent hydrolases superfamily. Adenosine and AMP deaminases family. Adenosine deaminase subfamily. It depends on Zn(2+) as a cofactor.

It carries out the reaction adenosine + H2O + H(+) = inosine + NH4(+). The catalysed reaction is 2'-deoxyadenosine + H2O + H(+) = 2'-deoxyinosine + NH4(+). Its function is as follows. Catalyzes the hydrolytic deamination of adenosine and 2-deoxyadenosine. The polypeptide is Adenosine deaminase (Escherichia coli O81 (strain ED1a)).